The primary structure comprises 270 residues: MANSTAELEELLMQRSLTDPQLQAAAAAAADFRILPDATVIKIGGQSVIDRGRAAVYPLVDEIVAARKNHKLLIGTGAGTRARHLYSIAAGLGLPAGVLAQLGSSVADQNAAMLGQLLAKHGIPVVGGAGLSAVPLSLAEVNAVVFSGMPPYKLWMRPAAEGVIPPYRTDAGCFLLAEQFGCKQMIFVKDEDGLYTANPKTSKDATFIPRISVDEMKAKGLHDSILEFPVLDLLQSAQHVREVQVVNGLVPGNLTRALAGEHVGTIITAS.

Octamer consisting of 4 alpha and 4 beta chains.

The protein localises to the cytoplasm. In terms of biological role, intracellular storage of molybdenum. Binds polyoxomolybdates. Can bind at least 90 molybdenum atoms per protein molecule. This chain is Molybdenum storage protein subunit beta, found in Azotobacter vinelandii (strain DJ / ATCC BAA-1303).